The chain runs to 113 residues: Large ribosomal subunit protein bL17 (113 aa).

It belongs to the bacterial ribosomal protein bL17 family. Part of the 50S ribosomal subunit. Contacts protein L32.

The protein is Large ribosomal subunit protein bL17 of Clostridium perfringens (strain ATCC 13124 / DSM 756 / JCM 1290 / NCIMB 6125 / NCTC 8237 / Type A).